Reading from the N-terminus, the 221-residue chain is Ras-related protein Rab-27A (221 aa).

An N-acetylserine modification is found at S2. Residue S2 is modified to Phosphoserine. 16-24 (GDSGVGKTS) lines the GTP pocket. The short motif at 38–46 (FITTVGIDF) is the Effector region element. GTP is bound by residues 74 to 78 (DTAGQ), 133 to 136 (NKSD), and 163 to 165 (SAA). A disulfide bond links C123 and C188. Residues C219 and C221 are each lipidated (S-geranylgeranyl cysteine). The residue at position 221 (C221) is a Cysteine methyl ester.

The protein belongs to the small GTPase superfamily. Rab family. As to quaternary structure, binds SYTL1, SLAC2B, MYRIP, SYTL3, SYTL4 and SYTL5. Interacts with RPH3A and RPH3A. Binds MLPH and SYTL2. Interacts with UNC13D. Does not interact with the BLOC-3 complex (heterodimer of HPS1 and HPS4). Interacts (GDP-bound form preferentially) with DENND10. As to expression, high levels in eye, intestine, lung, pancreas and spleen, and low or absent in brain, liver, heart, kidney, and skeletal muscle.

The protein localises to the membrane. The protein resides in the melanosome. It is found in the late endosome. It localises to the lysosome. The enzyme catalyses GTP + H2O = GDP + phosphate + H(+). With respect to regulation, regulated by guanine nucleotide exchange factors (GEFs) which promote the exchange of bound GDP for free GTP, GTPase activating proteins (GAPs) which increase the GTP hydrolysis activity, and GDP dissociation inhibitors which inhibit the dissociation of the nucleotide from the GTPase. Activated by GEFs such as DENND10. Its function is as follows. Small GTPase which cycles between active GTP-bound and inactive GDP-bound states. In its active state, binds to a variety of effector proteins to regulate homeostasis of late endocytic pathway, including endosomal positioning, maturation and secretion. Plays a role in cytotoxic granule exocytosis in lymphocytes. Required for both granule maturation and granule docking and priming at the immunologic synapse. This Rattus norvegicus (Rat) protein is Ras-related protein Rab-27A (Rab27a).